Reading from the N-terminus, the 360-residue chain is Phosphoserine aminotransferase (360 aa).

Arg41 provides a ligand contact to L-glutamate. Pyridoxal 5'-phosphate-binding residues include Trp101, Thr152, Asp172, and Gln195. The residue at position 196 (Lys196) is an N6-(pyridoxal phosphate)lysine. 237 to 238 contacts pyridoxal 5'-phosphate; the sequence is NT.

This sequence belongs to the class-V pyridoxal-phosphate-dependent aminotransferase family. SerC subfamily. In terms of assembly, homodimer. It depends on pyridoxal 5'-phosphate as a cofactor.

The protein localises to the cytoplasm. It carries out the reaction O-phospho-L-serine + 2-oxoglutarate = 3-phosphooxypyruvate + L-glutamate. The enzyme catalyses 4-(phosphooxy)-L-threonine + 2-oxoglutarate = (R)-3-hydroxy-2-oxo-4-phosphooxybutanoate + L-glutamate. The protein operates within amino-acid biosynthesis; L-serine biosynthesis; L-serine from 3-phospho-D-glycerate: step 2/3. It functions in the pathway cofactor biosynthesis; pyridoxine 5'-phosphate biosynthesis; pyridoxine 5'-phosphate from D-erythrose 4-phosphate: step 3/5. Its function is as follows. Catalyzes the reversible conversion of 3-phosphohydroxypyruvate to phosphoserine and of 3-hydroxy-2-oxo-4-phosphonooxybutanoate to phosphohydroxythreonine. This chain is Phosphoserine aminotransferase, found in Burkholderia cenocepacia (strain ATCC BAA-245 / DSM 16553 / LMG 16656 / NCTC 13227 / J2315 / CF5610) (Burkholderia cepacia (strain J2315)).